A 173-amino-acid polypeptide reads, in one-letter code: Small ribosomal subunit protein uS5 (173 aa).

The 64-residue stretch at 18–81 (LREKMIAVNR…EQARRGMFKV (64 aa)) folds into the S5 DRBM domain.

Belongs to the universal ribosomal protein uS5 family. Part of the 30S ribosomal subunit. Contacts proteins S4 and S8.

In terms of biological role, with S4 and S12 plays an important role in translational accuracy. Its function is as follows. Located at the back of the 30S subunit body where it stabilizes the conformation of the head with respect to the body. In Bordetella avium (strain 197N), this protein is Small ribosomal subunit protein uS5.